The following is a 259-amino-acid chain: Phosphatidylinositol transfer protein 2 (259 aa).

A coiled-coil region spans residues 231–259 (LTIEDIRKIEEETKAELAKKLEENKAANK).

The protein belongs to the PtdIns transfer protein family. PI transfer class IIA subfamily.

Its subcellular location is the cytoplasm. The protein resides in the golgi apparatus. Its function is as follows. Catalyzes the transfer of PtdIns and phosphatidylcholine between membranes. The chain is Phosphatidylinositol transfer protein 2 (pitB) from Dictyostelium discoideum (Social amoeba).